The following is a 225-amino-acid chain: Cytidylate kinase (225 aa).

Gly-11–Thr-19 lines the ATP pocket.

This sequence belongs to the cytidylate kinase family. Type 1 subfamily.

It localises to the cytoplasm. It carries out the reaction CMP + ATP = CDP + ADP. The catalysed reaction is dCMP + ATP = dCDP + ADP. This is Cytidylate kinase from Bacillus cereus (strain AH187).